The following is a 340-amino-acid chain: Ketol-acid reductoisomerase (NADP(+)) (340 aa).

The KARI N-terminal Rossmann domain maps to 1 to 183; it reads MAITVYYDKD…GGGRTGIIET (183 aa). NADP(+)-binding positions include 26–29, arginine 49, serine 52, serine 54, and 84–87; these read FGSQ and DEIQ. Residue histidine 109 is part of the active site. Glycine 135 is an NADP(+) binding site. Residues 184–329 enclose the KARI C-terminal knotted domain; the sequence is TFKAETETDL…RNLRAMMPWI (146 aa). Residues aspartate 192, glutamate 196, glutamate 228, and glutamate 232 each contribute to the Mg(2+) site. Serine 253 provides a ligand contact to substrate.

The protein belongs to the ketol-acid reductoisomerase family. Mg(2+) is required as a cofactor.

It carries out the reaction (2R)-2,3-dihydroxy-3-methylbutanoate + NADP(+) = (2S)-2-acetolactate + NADPH + H(+). The enzyme catalyses (2R,3R)-2,3-dihydroxy-3-methylpentanoate + NADP(+) = (S)-2-ethyl-2-hydroxy-3-oxobutanoate + NADPH + H(+). It functions in the pathway amino-acid biosynthesis; L-isoleucine biosynthesis; L-isoleucine from 2-oxobutanoate: step 2/4. The protein operates within amino-acid biosynthesis; L-valine biosynthesis; L-valine from pyruvate: step 2/4. Its function is as follows. Involved in the biosynthesis of branched-chain amino acids (BCAA). Catalyzes an alkyl-migration followed by a ketol-acid reduction of (S)-2-acetolactate (S2AL) to yield (R)-2,3-dihydroxy-isovalerate. In the isomerase reaction, S2AL is rearranged via a Mg-dependent methyl migration to produce 3-hydroxy-3-methyl-2-ketobutyrate (HMKB). In the reductase reaction, this 2-ketoacid undergoes a metal-dependent reduction by NADPH to yield (R)-2,3-dihydroxy-isovalerate. This is Ketol-acid reductoisomerase (NADP(+)) from Campylobacter jejuni subsp. jejuni serotype O:6 (strain 81116 / NCTC 11828).